We begin with the raw amino-acid sequence, 275 residues long: Tryptophan synthase alpha chain (275 aa).

Active-site proton acceptor residues include glutamate 51 and aspartate 62.

The protein belongs to the TrpA family. Tetramer of two alpha and two beta chains.

It carries out the reaction (1S,2R)-1-C-(indol-3-yl)glycerol 3-phosphate + L-serine = D-glyceraldehyde 3-phosphate + L-tryptophan + H2O. Its pathway is amino-acid biosynthesis; L-tryptophan biosynthesis; L-tryptophan from chorismate: step 5/5. Its function is as follows. The alpha subunit is responsible for the aldol cleavage of indoleglycerol phosphate to indole and glyceraldehyde 3-phosphate. In Methanopyrus kandleri (strain AV19 / DSM 6324 / JCM 9639 / NBRC 100938), this protein is Tryptophan synthase alpha chain.